We begin with the raw amino-acid sequence, 113 residues long: Hydrogenase maturation factor HypA (113 aa).

His-2 contributes to the Ni(2+) binding site. Zn(2+)-binding residues include Cys-73, Cys-76, Cys-89, and Cys-92.

It belongs to the HypA/HybF family.

In terms of biological role, involved in the maturation of [NiFe] hydrogenases. Required for nickel insertion into the metal center of the hydrogenase. This is Hydrogenase maturation factor HypA from Dechloromonas aromatica (strain RCB).